The following is a 176-amino-acid chain: Photosystem I assembly protein Ycf4 (176 aa).

Helical transmembrane passes span 22-42 (FLWA…GTAS) and 57-77 (VMTF…SMLF).

This sequence belongs to the Ycf4 family.

It is found in the plastid thylakoid membrane. Seems to be required for the assembly of the photosystem I complex. This is Photosystem I assembly protein Ycf4 from Cuscuta obtusiflora (Peruvian dodder).